The primary structure comprises 216 residues: Adenylate kinase (216 aa).

10 to 15 (GAGKGT) is an ATP binding site. The NMP stretch occupies residues 30 to 59 (STGDILRENVKKGTALGLKAKSYMDKGELV). Residues threonine 31, arginine 36, 57 to 59 (ELV), 85 to 88 (GFPR), and glutamine 92 each bind AMP. The tract at residues 126 to 163 (GRRICRSCGASYHLVFNPPKAKDLCDSCGGELYQRDDD) is LID. Residue arginine 127 coordinates ATP. Cysteine 130 and cysteine 133 together coordinate Zn(2+). 136-137 (SY) contributes to the ATP binding site. Positions 150 and 153 each coordinate Zn(2+). AMP-binding residues include arginine 160 and arginine 171. Lysine 199 lines the ATP pocket.

Belongs to the adenylate kinase family. As to quaternary structure, monomer.

The protein resides in the cytoplasm. It catalyses the reaction AMP + ATP = 2 ADP. It functions in the pathway purine metabolism; AMP biosynthesis via salvage pathway; AMP from ADP: step 1/1. In terms of biological role, catalyzes the reversible transfer of the terminal phosphate group between ATP and AMP. Plays an important role in cellular energy homeostasis and in adenine nucleotide metabolism. In Methanocella arvoryzae (strain DSM 22066 / NBRC 105507 / MRE50), this protein is Adenylate kinase.